The chain runs to 901 residues: Alanine--tRNA ligase (901 aa).

4 residues coordinate Zn(2+): histidine 581, histidine 585, cysteine 684, and histidine 688.

Belongs to the class-II aminoacyl-tRNA synthetase family. The cofactor is Zn(2+).

Its subcellular location is the cytoplasm. It catalyses the reaction tRNA(Ala) + L-alanine + ATP = L-alanyl-tRNA(Ala) + AMP + diphosphate. Catalyzes the attachment of alanine to tRNA(Ala) in a two-step reaction: alanine is first activated by ATP to form Ala-AMP and then transferred to the acceptor end of tRNA(Ala). Also edits incorrectly charged Ser-tRNA(Ala) and Gly-tRNA(Ala) via its editing domain. In Mycobacterium ulcerans (strain Agy99), this protein is Alanine--tRNA ligase.